A 108-amino-acid polypeptide reads, in one-letter code: Abdominal ganglion neuropeptide R3-14 (108 aa).

The signal sequence occupies residues 1-23 (MQVLHLCLAVSIAVALLSQAAWS). E24 and E52 each carry pyrrolidone carboxylic acid (Glu); partial. Position 66 is a pyrrolidone carboxylic acid (Q66).

The partial formation of pyroglutamate from N-terminal glutamic acid in peptides isolated from single cells is detected by mass spectrometry. There are indications this modification depends on a heat sensitive factor. Neurons R3-R14. A cluster of 12 giant neurons located on the right side of the abdominal ganglion.

It localises to the secreted. Functionally, HRBP is a myoactive peptide that excites Aplysia heart and enhances gut motility in vitro. This Aplysia californica (California sea hare) protein is Abdominal ganglion neuropeptide R3-14.